A 377-amino-acid chain; its full sequence is dTDP-fucopyranose mutase (377 aa).

Residues serine 12, 31 to 32 (DD), asparagine 39, 58 to 59 (HI), arginine 348, and 355 to 360 (LDMDVC) contribute to the FAD site.

The protein belongs to the UDP-galactopyranose/dTDP-fucopyranose mutase family. The cofactor is FAD.

The catalysed reaction is dTDP-alpha-D-fucose = dTDP-alpha-D-fucofuranose. It functions in the pathway bacterial outer membrane biogenesis; LPS O-antigen biosynthesis. With respect to regulation, inhibited by Cu(2+), while other divalent cations such as Ca(2+), Co(2+), Fe(2+) and Mg(2+) have no obvious effects on enzyme activity. Catalyzes the conversion of dTDP-alpha-D-fucopyranose to dTDP-alpha-D-fucofuranose. This is a step in the biosynthesis of D-fucofuranose, a component of E.coli O52 O antigen. The polypeptide is dTDP-fucopyranose mutase (fcf2) (Escherichia coli).